A 423-amino-acid chain; its full sequence is Adenylosuccinate synthetase (423 aa).

GTP is bound by residues 12–18 (GDEGKGK) and 40–42 (GHT). The Proton acceptor role is filled by Asp13. Asp13 and Gly40 together coordinate Mg(2+). Residues 13-16 (DEGK), 38-41 (NAGH), Thr128, Arg142, Gln223, Thr238, and Arg302 each bind IMP. His41 serves as the catalytic Proton donor. 298–304 (TTTGRPR) provides a ligand contact to substrate. GTP is bound by residues Arg304, 330–332 (RLD), and 412–414 (CIG).

Belongs to the adenylosuccinate synthetase family. Homodimer. Mg(2+) is required as a cofactor.

It is found in the cytoplasm. The enzyme catalyses IMP + L-aspartate + GTP = N(6)-(1,2-dicarboxyethyl)-AMP + GDP + phosphate + 2 H(+). The protein operates within purine metabolism; AMP biosynthesis via de novo pathway; AMP from IMP: step 1/2. Its function is as follows. Plays an important role in the de novo pathway of purine nucleotide biosynthesis. Catalyzes the first committed step in the biosynthesis of AMP from IMP. The sequence is that of Adenylosuccinate synthetase from Dehalococcoides mccartyi (strain ATCC BAA-2266 / KCTC 15142 / 195) (Dehalococcoides ethenogenes (strain 195)).